The sequence spans 411 residues: ATP-dependent RNA helicase eIF4A (411 aa).

The interval 1 to 23 is disordered; sequence MSKPEDTSAAAAAPAGEAGNNLN. Positions 9 to 19 are enriched in low complexity; that stretch reads AAAAAPAGEAG. The Q motif motif lies at 38–66; sequence DNFDNMELKEELLRGVYAYGFERPSAIQA. Residues 69-239 form the Helicase ATP-binding domain; it reads IVPVIKGHDV…KKFMRDPIRI (171 aa). 82–89 lines the ATP pocket; it reads AQSGTGKT. The short motif at 187–190 is the DEAD box element; sequence DEAD. The region spanning 250 to 411 is the Helicase C-terminal domain; that stretch reads GIKQFYVAVE…EMPLNVADLI (162 aa).

The protein belongs to the DEAD box helicase family. eIF4A subfamily. In terms of assembly, component of the eIF4F complex, which composition varies with external and internal environmental conditions. It is composed of at least eIF4A, eIF4E and eIF4G.

The protein localises to the cytoplasm. The catalysed reaction is ATP + H2O = ADP + phosphate + H(+). Functionally, ATP-dependent RNA helicase which is a subunit of the eIF4F complex involved in cap recognition and is required for mRNA binding to ribosome. In the current model of translation initiation, eIF4A unwinds RNA secondary structures in the 5'-UTR of mRNAs which is necessary to allow efficient binding of the small ribosomal subunit, and subsequent scanning for the initiator codon. This chain is ATP-dependent RNA helicase eIF4A (TIF1), found in Mycosarcoma maydis (Corn smut fungus).